The chain runs to 1138 residues: MARYTQRPENALKRANEFIEVGKPLRALDTLQEVFRNKRWNYAYSETVIEPLMFKYLYLCVELKKSHIAKEGLFQYRNMFQLVNVNSLENVIRGYLKMAEEHTEAAQAQSSAAVAVLELDDLDNIATPESILMSAVCGEDAQDRSDRTILLPWVKFLWESYCQCLELLRVNTHCEALYHDIARMAFQFCLKYNRKSEFRRLCDKLRKHLEDICKSSNQTTGVSINKVETQQLCLDTRLYLLDSAIQMELWQEAYKAIEDIHGLMAMSKKTPVPKTMANYYQKLAMVFSKAGNQLFHAAALLKLFQLTRELKKNLTKDDLQRMAAHVLLATLSIPLPSAHPEFDRFIEADKSPLEKAQKLAVLLGLPQPPTRVSLIREVVRLNVPNLVSDEFRNLYNWLEVDFNPLNLCKRIQSIVDTIESSETENTLLTPYIQSLKDVTIMRLIRQISQVYESIEFKRLLELAPFCNIFELEKLLVESVRHNDMQIRIDHQRNSIYFGTDLTESQREYRPDGPTLQSMPSEQIRSQLVNMSTVLTRAVSIVYPNRERDQRAKLRTQMVQHYHEIKDREHQRILQRQKIIEDRKEFIEKQNNAREEEEARRHEEESRKAKLAEQKRLEQEQEERERKRHENEIQAIKEKSLKEKVQQISQTAHGKKMLSKLDEEGIKKLDAEQIAMRESEELQRERKELQSKLKSQEKKIDYFERAKRIEEIPLFEKYLAEKNVKDKEFWEATEQTRIENAIAERKDAVSQQDRLKRMYPDRDEYLEALKKERASLYVEKLKKFDIALAEERKKRLADRVVRRREERRQAYLRAKEEERFRKEEEIRHAREAEERAAAEARRLEREAEDEKRRQQYEKQRAKEEEAERKIQEDRERLAREVAVERERSEKERDVWRPRADRVERPSAAPAGGASEWRRNAPPTDRNERTDRGDRNDRNDRNDRNDRNDRNDRNDRNDRPERAERKENDGGADSSWRVRREPESQRGTGAGMDRSERGGGGAPSGRDDKWRRGGDRSERLGGDRDRDSFRRNDGPRRDDDRGGFRRDDQPQRETGSNWRDSPRQNDRDNRRTTGERRDVRGAGPKEGGGGVSGGGAGGGGGNWRTAPSPREEKAPPKREQAQDKENKAGDDGEWTSVKRR.

One can recognise a PCI domain in the interval 319 to 502; it reads LQRMAAHVLL…NSIYFGTDLT (184 aa). 2 disordered regions span residues 590-633 and 817-1138; these read NNAR…NEIQ and ERFR…VKRR. 4 stretches are compositionally biased toward basic and acidic residues: residues 817–903, 923–967, 1003–1049, and 1058–1078; these read ERFR…RVER, DRNE…KEND, GRDD…DQPQ, and DSPR…RDVR. Positions 1082-1100 are enriched in gly residues; sequence PKEGGGGVSGGGAGGGGGN. Basic and acidic residues predominate over residues 1107–1128; that stretch reads PREEKAPPKREQAQDKENKAGD.

The protein belongs to the eIF-3 subunit A family. Component of the eukaryotic translation initiation factor 3 (eIF-3) complex. The eIF-3 complex interacts with pix.

It is found in the cytoplasm. Functionally, RNA-binding component of the eukaryotic translation initiation factor 3 (eIF-3) complex, which is involved in protein synthesis of a specialized repertoire of mRNAs and, together with other initiation factors, stimulates binding of mRNA and methionyl-tRNAi to the 40S ribosome. The eIF-3 complex specifically targets and initiates translation of a subset of mRNAs involved in cell proliferation. This is Eukaryotic translation initiation factor 3 subunit A from Drosophila virilis (Fruit fly).